Reading from the N-terminus, the 202-residue chain is LexA repressor (202 aa).

Catalysis depends on for autocatalytic cleavage activity residues serine 123 and lysine 159.

It belongs to the peptidase S24 family. As to quaternary structure, homodimer.

The enzyme catalyses Hydrolysis of Ala-|-Gly bond in repressor LexA.. Binds the consensus sequence 5'-TGTTC-N(4)-GAACA-3'; some genes have a tandem consensus sequence, at high concentrations their binding is cooperative. Binds to the promoters of a number of genes, including dinB, imuA, lexA, recA, recQ, splB and uvrA. Represses a number of genes involved in the response to DNA damage (SOS response). In the presence of single-stranded DNA, RecA interacts with LexA causing an autocatalytic cleavage which disrupts the DNA-binding part of LexA, leading to derepression of the SOS regulon and eventually DNA repair. The polypeptide is LexA repressor (Verrucomicrobium spinosum (strain ATCC 43997 / DSM 4136 / JCM 18804 / IFAM 1439)).